We begin with the raw amino-acid sequence, 244 residues long: Dirigent protein 18 (244 aa).

An N-terminal signal peptide occupies residues 1 to 25; sequence MMKQSPFSLLTSIFLIAALFTATTA.

This sequence belongs to the plant dirigent protein family. As to quaternary structure, homodimer.

It is found in the secreted. Its subcellular location is the extracellular space. The protein resides in the apoplast. Functionally, dirigent proteins impart stereoselectivity on the phenoxy radical-coupling reaction, yielding optically active lignans from two molecules of coniferyl alcohol in the biosynthesis of lignans, flavonolignans, and alkaloids and thus plays a central role in plant secondary metabolism. The chain is Dirigent protein 18 (DIR18) from Arabidopsis thaliana (Mouse-ear cress).